The primary structure comprises 94 residues: Small ribosomal subunit protein uS19 (94 aa).

The disordered stretch occupies residues 75 to 94; the sequence is SHTRTFKGHAGDKKAAGSKR. Residues 83 to 94 show a composition bias toward basic and acidic residues; sequence HAGDKKAAGSKR.

Belongs to the universal ribosomal protein uS19 family.

Protein S19 forms a complex with S13 that binds strongly to the 16S ribosomal RNA. The polypeptide is Small ribosomal subunit protein uS19 (Nitrosomonas europaea (strain ATCC 19718 / CIP 103999 / KCTC 2705 / NBRC 14298)).